The chain runs to 229 residues: PKHD-type hydroxylase RPD_3334 (229 aa).

The Fe2OG dioxygenase domain occupies 78 to 180 (QIFPPLFNRY…RVASFFWLQS (103 aa)). Positions 98, 100, and 161 each coordinate Fe cation. Arg-171 is a 2-oxoglutarate binding site.

The cofactor is Fe(2+). L-ascorbate is required as a cofactor.

In Rhodopseudomonas palustris (strain BisB5), this protein is PKHD-type hydroxylase RPD_3334.